The chain runs to 117 residues: Protein TCL1B2 (117 aa).

It belongs to the TCL1 family.

The polypeptide is Protein TCL1B2 (Tcl1b2) (Mus musculus (Mouse)).